Here is a 189-residue protein sequence, read N- to C-terminus: Peptide deformylase (189 aa).

Fe cation is bound by residues cysteine 116 and histidine 159. The active site involves glutamate 160. Histidine 163 contacts Fe cation.

Belongs to the polypeptide deformylase family. Requires Fe(2+) as cofactor.

It catalyses the reaction N-terminal N-formyl-L-methionyl-[peptide] + H2O = N-terminal L-methionyl-[peptide] + formate. Its function is as follows. Removes the formyl group from the N-terminal Met of newly synthesized proteins. Requires at least a dipeptide for an efficient rate of reaction. N-terminal L-methionine is a prerequisite for activity but the enzyme has broad specificity at other positions. The sequence is that of Peptide deformylase from Limosilactobacillus fermentum (strain NBRC 3956 / LMG 18251) (Lactobacillus fermentum).